The chain runs to 323 residues: Mycothiol acetyltransferase (323 aa).

A 1D-myo-inositol 2-(L-cysteinylamino)-2-deoxy-alpha-D-glucopyranoside-binding site is contributed by glutamate 44. N-acetyltransferase domains are found at residues 77–176 and 173–323; these read GQDL…VSLR and VSLR…VKEG. Residue 98–100 coordinates acetyl-CoA; that stretch reads IAV. Residues glutamate 200, lysine 240, and glutamate 253 each coordinate 1D-myo-inositol 2-(L-cysteinylamino)-2-deoxy-alpha-D-glucopyranoside. Acetyl-CoA contacts are provided by residues 257 to 259 and 264 to 270; these read VGV and QGSGLGK. Tyrosine 291 is a binding site for 1D-myo-inositol 2-(L-cysteinylamino)-2-deoxy-alpha-D-glucopyranoside.

This sequence belongs to the acetyltransferase family. MshD subfamily. As to quaternary structure, monomer.

It carries out the reaction 1D-myo-inositol 2-(L-cysteinylamino)-2-deoxy-alpha-D-glucopyranoside + acetyl-CoA = mycothiol + CoA + H(+). Functionally, catalyzes the transfer of acetyl from acetyl-CoA to desacetylmycothiol (Cys-GlcN-Ins) to form mycothiol. The chain is Mycothiol acetyltransferase from Pseudarthrobacter chlorophenolicus (strain ATCC 700700 / DSM 12829 / CIP 107037 / JCM 12360 / KCTC 9906 / NCIMB 13794 / A6) (Arthrobacter chlorophenolicus).